An 83-amino-acid polypeptide reads, in one-letter code: Putative defensin-like protein 110 (83 aa).

An N-terminal signal peptide occupies residues 1 to 24; that stretch reads MAITKKNLIAFVFTILFVISYVHC. 4 disulfide bridges follow: Cys-43–Cys-81, Cys-49–Cys-73, Cys-59–Cys-79, and Cys-63–Cys-80.

Belongs to the DEFL family.

The protein localises to the secreted. In Arabidopsis thaliana (Mouse-ear cress), this protein is Putative defensin-like protein 110.